The chain runs to 284 residues: 4-diphosphocytidyl-2-C-methyl-D-erythritol kinase (284 aa).

Residue K14 is part of the active site. An ATP-binding site is contributed by 97-107 (PMGGGLGGGSS). The active site involves D139.

Belongs to the GHMP kinase family. IspE subfamily.

The catalysed reaction is 4-CDP-2-C-methyl-D-erythritol + ATP = 4-CDP-2-C-methyl-D-erythritol 2-phosphate + ADP + H(+). The protein operates within isoprenoid biosynthesis; isopentenyl diphosphate biosynthesis via DXP pathway; isopentenyl diphosphate from 1-deoxy-D-xylulose 5-phosphate: step 3/6. Functionally, catalyzes the phosphorylation of the position 2 hydroxy group of 4-diphosphocytidyl-2C-methyl-D-erythritol. The protein is 4-diphosphocytidyl-2-C-methyl-D-erythritol kinase of Psychromonas ingrahamii (strain DSM 17664 / CCUG 51855 / 37).